The chain runs to 358 residues: Methylthioribose-1-phosphate isomerase (358 aa).

Residues 54-56 (RGA), R96, and Q205 each bind substrate. D246 (proton donor) is an active-site residue. 256-257 (NK) provides a ligand contact to substrate.

The protein belongs to the eIF-2B alpha/beta/delta subunits family. MtnA subfamily.

The catalysed reaction is 5-(methylsulfanyl)-alpha-D-ribose 1-phosphate = 5-(methylsulfanyl)-D-ribulose 1-phosphate. The protein operates within amino-acid biosynthesis; L-methionine biosynthesis via salvage pathway; L-methionine from S-methyl-5-thio-alpha-D-ribose 1-phosphate: step 1/6. Its function is as follows. Catalyzes the interconversion of methylthioribose-1-phosphate (MTR-1-P) into methylthioribulose-1-phosphate (MTRu-1-P). The sequence is that of Methylthioribose-1-phosphate isomerase from Azotobacter vinelandii (strain DJ / ATCC BAA-1303).